The primary structure comprises 327 residues: Cobalamin biosynthesis protein CobD (327 aa).

4 consecutive transmembrane segments (helical) span residues 63 to 83 (VGIL…ARLF), 84 to 104 (DVLG…FLAQ), 158 to 178 (FSDG…PGLL), and 305 to 325 (VFYA…LPLL).

This sequence belongs to the CobD/CbiB family.

The protein resides in the cell membrane. It participates in cofactor biosynthesis; adenosylcobalamin biosynthesis. Its function is as follows. Converts cobyric acid to cobinamide by the addition of aminopropanol on the F carboxylic group. The protein is Cobalamin biosynthesis protein CobD of Rhizobium meliloti (strain 1021) (Ensifer meliloti).